Reading from the N-terminus, the 408-residue chain is NFATC2-interacting protein (408 aa).

The segment at 1–113 (MAEPVGKRGR…LDPGEAPLVP (113 aa)) is disordered. A compositionally biased stretch (low complexity) spans 24–40 (QRSPSRGTLDVVSVDLV). 7 positions are modified to phosphoserine: S41, S43, S73, S77, S79, S81, and S116. Residues K118 and K120 each participate in a glycyl lysine isopeptide (Lys-Gly) (interchain with G-Cter in SUMO2) cross-link. Residues 141 to 205 (EEEVELADSS…TKSRKHTRAL (65 aa)) form a disordered region. A compositionally biased stretch (basic and acidic residues) spans 169–181 (RTKDKEEKKKTEI). Phosphoserine is present on residues S187, S190, and S193. Positions 196–205 (TKSRKHTRAL) are enriched in basic residues. A coiled-coil region spans residues 197–220 (KSRKHTRALKKLSEVNKRLQDLRS). 2 positions are modified to phosphoserine: S209 and S303. A phosphothreonine mark is found at T305 and T307. The 72-residue stretch at 337–408 (LQLRVQGKEK…ESGDLIEVWG (72 aa)) folds into the Ubiquitin-like domain. A phosphoserine mark is found at S358 and S379.

As to quaternary structure, interacts with NFATC2, TRAF1, TRAF2 and PRMT1. Interacts with UBE2I/UBC9. Post-translationally, methylation at the N-terminus by PRMT1 modulates interaction with the NFAT complex and results in augmented cytokine production.

It is found in the nucleus. The protein resides in the cytoplasm. In terms of biological role, in T-helper 2 (Th2) cells, regulates the magnitude of NFAT-driven transcription of a specific subset of cytokine genes, including IL3, IL4, IL5 and IL13, but not IL2. Recruits PRMT1 to the IL4 promoter; this leads to enhancement of histone H4 'Arg-3'-methylation and facilitates subsequent histone acetylation at the IL4 locus, thus promotes robust cytokine expression. Down-regulates formation of poly-SUMO chains by UBE2I/UBC9. The chain is NFATC2-interacting protein (NFATC2IP) from Macaca fascicularis (Crab-eating macaque).